The following is a 73-amino-acid chain: Gas vesicle protein A (73 aa).

This sequence belongs to the gas vesicle GvpA family. The gas vesicle shell is 2 nm thick and consists of a single layer of this protein. It forms helical ribs nearly perpendicular to the long axis of the vesicle.

Its subcellular location is the gas vesicle shell. Gas vesicles are hollow, gas filled proteinaceous nanostructures found in some microorganisms. During planktonic growth they allow positioning of the organism at a favorable depth for light or nutrient acquisition. GvpA forms the protein shell. The protein is Gas vesicle protein A of Nostoc punctiforme (strain ATCC 29133 / PCC 73102).